A 1135-amino-acid chain; its full sequence is Eukaryotic translation initiation factor 3 subunit A (1135 aa).

One can recognise a PCI domain in the interval 319–501 (LQRMAAHVLL…NSIYFGTDLT (183 aa)). Basic and acidic residues-rich tracts occupy residues 588 to 623 (QNNAREEEEARRQEEESRKAKLAEQKRLEQEQEERE) and 829 to 899 (AAEE…RGGD). 2 disordered regions span residues 588–631 (QNNA…QNEI) and 829–1135 (AAEE…VKRR). At S908 the chain carries Phosphoserine. Basic and acidic residues-rich tracts occupy residues 920 to 971 (ERNE…EPDS), 985 to 1045 (SRDD…EPQR), 1053 to 1081 (DAPRNADRENRRPAGERRDRDVRETRGDQ), and 1104 to 1125 (AREEKPASKRDQPQEKENKAAD).

Belongs to the eIF-3 subunit A family. Component of the eukaryotic translation initiation factor 3 (eIF-3) complex. The eIF-3 complex interacts with pix.

The protein localises to the cytoplasm. RNA-binding component of the eukaryotic translation initiation factor 3 (eIF-3) complex, which is involved in protein synthesis of a specialized repertoire of mRNAs and, together with other initiation factors, stimulates binding of mRNA and methionyl-tRNAi to the 40S ribosome. The eIF-3 complex specifically targets and initiates translation of a subset of mRNAs involved in cell proliferation. The protein is Eukaryotic translation initiation factor 3 subunit A of Drosophila erecta (Fruit fly).